The sequence spans 225 residues: Glutathione S-transferase-like protein tpcF (225 aa).

One can recognise a GST N-terminal domain in the interval 4–85 (IQPITVYGKG…YLVSHYDPDH (82 aa)). Residues 92-225 (GSNLAALATQ…KGMADIFPST (134 aa)) enclose the GST C-terminal domain.

Belongs to the GST superfamily. Specifically expressed in conidia.

It participates in secondary metabolite biosynthesis. Its function is as follows. Glutathione S-transferase-like protein; part of the gene cluster that mediates the biosynthesis of trypacidin, a mycotoxin with antiprotozoal activity and that plays a role in the infection process. The pathway begins with the synthesis of atrochrysone thioester by the polyketide synthase (PKS) tpcC. The atrochrysone carboxyl ACP thioesterase tpcB then breaks the thioester bond and releases the atrochrysone carboxylic acid from tpcC. The decarboxylase tpcK converts atrochrysone carboxylic acid to atrochrysone which is further reduced into emodin anthrone. The next step is performed by the emodin anthrone oxygenase tpcL that catalyzes the oxidation of emodinanthrone to emodin. Emodin O-methyltransferase encoded by tpcA catalyzes methylation of the 8-hydroxy group of emodin to form questin. Ring cleavage of questin by questin oxidase tpcI leads to desmethylsulochrin via several intermediates including questin epoxide. Another methylation step catalyzed by tpcM leads to the formation of sulochrin which is further converted to monomethylsulfochrin by tpcH. Finally, the tpcJ catalyzes the conversion of monomethylsulfochrin to trypacidin. Trypacidin is toxic for human pulmonary and bronchial epithelial cells by initiating the intracellular formation of nitric oxide (NO) and hydrogen peroxide (H(2)O(2)), thus triggering host necrotic cell death. The trypacidin pathway is also able to produce endocrocin via a distinct route from the endocrocin Enc pathway. The chain is Glutathione S-transferase-like protein tpcF from Aspergillus fumigatus (strain ATCC MYA-4609 / CBS 101355 / FGSC A1100 / Af293) (Neosartorya fumigata).